Reading from the N-terminus, the 384-residue chain is Cobalt-precorrin-5B C(1)-methyltransferase (384 aa).

The protein belongs to the CbiD family.

It catalyses the reaction Co-precorrin-5B + S-adenosyl-L-methionine = Co-precorrin-6A + S-adenosyl-L-homocysteine. It participates in cofactor biosynthesis; adenosylcobalamin biosynthesis; cob(II)yrinate a,c-diamide from sirohydrochlorin (anaerobic route): step 6/10. Its function is as follows. Catalyzes the methylation of C-1 in cobalt-precorrin-5B to form cobalt-precorrin-6A. This chain is Cobalt-precorrin-5B C(1)-methyltransferase, found in Marinomonas sp. (strain MWYL1).